Consider the following 1885-residue polypeptide: Chitin synthase 5 (1885 aa).

Residues 1-789 (MATRGNVPAH…SIALTGSQAA (789 aa)) enclose the Myosin motor domain. 99–106 (GESGSGKT) provides a ligand contact to ATP. N-linked (GlcNAc...) asparagine glycans are attached at residues Asn-219 and Asn-429. Residues 601-649 (KPLRMPSVSRKKHDQLRRMASRRADRSPAPQEEEPLPGTEEAKVRRTKP) form a disordered region. Basic residues predominate over residues 609 to 621 (SRKKHDQLRRMAS). Residues 666–690 (LDNITKSLTAPNVNNYFVFCLKPND) are actin-binding. N-linked (GlcNAc...) asparagine glycosylation is present at Asn-668. Residues 794–817 (GDIGSPSRPDTPGHNPFSDSKARL) form a disordered region. 2 helical membrane-spanning segments follow: residues 894–914 (WLAI…KWIG) and 929–949 (FAIN…IIVF). One can recognise a Cytochrome b5 heme-binding domain in the interval 957-1016 (QNVYSAAELSAHDGKGKHSAYVAIRGQVFDLGAFMPNHYPKIIPQSSLKKYAGVDATGLF). Asn-1043 and Asn-1068 each carry an N-linked (GlcNAc...) asparagine glycan. The helical transmembrane segment at 1205 to 1225 (ILLAVSILLCSVIGFKFFAAL) threads the bilayer. N-linked (GlcNAc...) asparagine glycans are attached at residues Asn-1462 and Asn-1568. 3 consecutive transmembrane segments (helical) span residues 1599 to 1619 (LLST…IVLL), 1626 to 1646 (VPLT…IIFI), and 1653 to 1673 (MIGW…GLPL). N-linked (GlcNAc...) asparagine glycosylation is found at Asn-1759 and Asn-1790. The region spanning 1827-1882 (LPTDDMLLNEIRDILRTADLMTVTKKGIKQELERRFNVNLDMKRAYIGSATEAILS) is the DEK-C domain.

This sequence in the N-terminal section; belongs to the TRAFAC class myosin-kinesin ATPase superfamily. Myosin family. It in the C-terminal section; belongs to the chitin synthase family. Class V subfamily. Maximal activity requires trypsin activation, suggesting a zymogenic nature.

Its subcellular location is the cell membrane. The protein localises to the membrane. It catalyses the reaction [(1-&gt;4)-N-acetyl-beta-D-glucosaminyl](n) + UDP-N-acetyl-alpha-D-glucosamine = [(1-&gt;4)-N-acetyl-beta-D-glucosaminyl](n+1) + UDP + H(+). Polymerizes chitin, a structural polymer of the cell wall and septum, by transferring the sugar moiety of UDP-GlcNAc to the non-reducing end of the growing chitin polymer. CHS5 is required for the sustained growth at 37 degrees Celsius and is of critical importance for virulence. Especially important at infection temperatures for maintaining the cell wall integrity of developing yeast buds, elongating tips of hyphae, and random sites of expansion in sclerotic forms. The chain is Chitin synthase 5 from Exophiala dermatitidis (strain ATCC 34100 / CBS 525.76 / NIH/UT8656) (Black yeast).